Here is a 162-residue protein sequence, read N- to C-terminus: Auxin-responsive protein SAUR36 (162 aa).

This sequence belongs to the ARG7 family. As to expression, expressed in embryo, endosperm, growing hypocotyls and shoot apical meristems.

Acts a positive regulator of leaf senescence and may mediate auxin-induced leaf senescence. Plays a role in the regulation of seed germination by gibberellins and abscisic acid (ABA). Plays a role in the regulation of light-dependent hypocotyl elongation. This is Auxin-responsive protein SAUR36 from Arabidopsis thaliana (Mouse-ear cress).